A 177-amino-acid polypeptide reads, in one-letter code: Transcription antitermination protein NusB (177 aa).

Residues 1–35 (MTDSTHPTPSARPPRQPRTGTTGTGARKAGSKSGR) form a disordered region. The span at 17-28 (PRTGTTGTGARK) shows a compositional bias: low complexity.

This sequence belongs to the NusB family.

Involved in transcription antitermination. Required for transcription of ribosomal RNA (rRNA) genes. Binds specifically to the boxA antiterminator sequence of the ribosomal RNA (rrn) operons. The chain is Transcription antitermination protein NusB from Acidovorax sp. (strain JS42).